A 222-amino-acid chain; its full sequence is Cyclin-dependent kinase inhibitor 3 (222 aa).

A disordered region spans residues 68–101; it reads KPSSLIEPKQPPRVHRSGIKESGSRSRVDSVNSV. Residues 85–95 are compositionally biased toward basic and acidic residues; the sequence is GIKESGSRSRV.

Belongs to the CDI family. ICK/KRP subfamily. Specifically interacts with CDKA-1, but not with CDKB1-1.

It is found in the nucleus. It localises to the nucleoplasm. Its function is as follows. Binds and inhibits CYCD2-1/CDKA-1 complex kinase activity. May target specifically CDKA-1. In Arabidopsis thaliana (Mouse-ear cress), this protein is Cyclin-dependent kinase inhibitor 3 (KRP3).